The chain runs to 357 residues: Enoyl-[acyl-carrier-protein] reductase, mitochondrial (357 aa).

A mitochondrion-targeting transit peptide spans 1–19 (MLRRGFLSRINAAQWSRQM). An Enoyl reductase (ER) domain is found at 36–352 (EVLQLVEDKL…FKGFTGKKYI (317 aa)). The Proton donor role is filled by Y74. NADP(+) contacts are provided by residues N147, 173-176 (NSAV), 196-198 (RDR), 264-267 (YGGM), 289-291 (FWM), K349, and K350.

The protein belongs to the zinc-containing alcohol dehydrogenase family. Quinone oxidoreductase subfamily. In terms of assembly, homodimer. As to expression, expressed in the central nervous system.

The protein localises to the mitochondrion. It carries out the reaction a 2,3-saturated acyl-[ACP] + NADP(+) = a (2E)-enoyl-[ACP] + NADPH + H(+). Catalyzes the NADPH-dependent reduction of trans-2-enoyl thioesters in mitochondrial fatty acid synthesis (fatty acid synthesis type II). Fatty acid chain elongation in mitochondria uses acyl carrier protein (ACP) as an acyl group carrier, but the enzyme accepts both ACP and CoA thioesters as substrates in vitro. Involved in iron homeostasis; affecting Fe-S cluster assembly and ceramide metabolism. Required for proper morphology and bioenergetic functions of mitochondria. Required for maintenance of neurons, including photoreceptor neurons. The sequence is that of Enoyl-[acyl-carrier-protein] reductase, mitochondrial from Drosophila melanogaster (Fruit fly).